The sequence spans 322 residues: Phosphatidylglycerol--prolipoprotein diacylglyceryl transferase (322 aa).

4 consecutive transmembrane segments (helical) span residues 21 to 41 (PLPIRAYAMCIIAGIIVAIWL), 50 to 70 (GGNPEVVLDAAIVAVPAGIIG), 98 to 118 (NGGLGIWGAVILGGLAVWAYF), and 123 to 143 (IPLAPFADAVAPGVILAQAIG). R144 lines the a 1,2-diacyl-sn-glycero-3-phospho-(1'-sn-glycerol) pocket. A run of 2 helical transmembrane segments spans residues 191–211 (VHPTFLYEMLWNLLIFGLLIW) and 254–274 (INTLVSAVVFILAVIVFLRLG). Residues 283-322 (VDPAYHAAQAERDDTETAGLDATTGTVPGDSPETTGKKRK) form a disordered region.

This sequence belongs to the Lgt family.

It is found in the cell membrane. The catalysed reaction is L-cysteinyl-[prolipoprotein] + a 1,2-diacyl-sn-glycero-3-phospho-(1'-sn-glycerol) = an S-1,2-diacyl-sn-glyceryl-L-cysteinyl-[prolipoprotein] + sn-glycerol 1-phosphate + H(+). Its pathway is protein modification; lipoprotein biosynthesis (diacylglyceryl transfer). Catalyzes the transfer of the diacylglyceryl group from phosphatidylglycerol to the sulfhydryl group of the N-terminal cysteine of a prolipoprotein, the first step in the formation of mature lipoproteins. This is Phosphatidylglycerol--prolipoprotein diacylglyceryl transferase from Corynebacterium efficiens (strain DSM 44549 / YS-314 / AJ 12310 / JCM 11189 / NBRC 100395).